The chain runs to 496 residues: MKKKISEQEIIRHQKMNELKKINIDPFGKKIVPSHSIKQIILQYQKEDSLAFEQSQINVCVAGRIVLKRGQGKAGFLHLQDFDFRIQAYVKLDLVGKDAFQIYQNCDLGDIIGIKGFLFKTKTQELTIKALEFIHLTKALKPLPDKFHGLQNREDMRKKRYVDLIVNEKTRQVFLTRSLIMKYIRNFFDNQGFLEVETPILQPTLGGASAKPFITHHNALNCDFYLRIATELPLKKLIVGGMNKVYEIGRLFRNEGIDATHNPEFSTIEAYLAYADMQDIMDLTKQCLQELVQKIFGKLQFTYQNQEIDFSHFAKVSMVASIKEKTGIDFTDHFTLEQCLSLAKKHKIEVMPHFSQGHIIEAFFGKYVENALIQPTFVYGHPLEISPLAKQNEFDPRFTDRFELFIVGKEFANAFRELNDPIEQEKRFLNQLKQKQLGNEEANDMDYDFLNALNYGMPPTGGLGMGIDRLVMLLTDTANIRDVILFPHCKNQNKFI.

Mg(2+) contacts are provided by Glu403 and Glu410.

The protein belongs to the class-II aminoacyl-tRNA synthetase family. As to quaternary structure, homodimer. It depends on Mg(2+) as a cofactor.

It is found in the cytoplasm. It catalyses the reaction tRNA(Lys) + L-lysine + ATP = L-lysyl-tRNA(Lys) + AMP + diphosphate. The polypeptide is Lysine--tRNA ligase (Aster yellows witches'-broom phytoplasma (strain AYWB)).